Reading from the N-terminus, the 295-residue chain is Light-independent protochlorophyllide reductase iron-sulfur ATP-binding protein (295 aa).

ATP contacts are provided by residues 39 to 44 (GIGKST) and lysine 68. Serine 43 serves as a coordination point for Mg(2+). Residues cysteine 124 and cysteine 158 each coordinate [4Fe-4S] cluster. ATP is bound at residue 209 to 210 (NR).

It belongs to the NifH/BchL/ChlL family. In terms of assembly, homodimer. Protochlorophyllide reductase is composed of three subunits; ChlL, ChlN and ChlB. [4Fe-4S] cluster serves as cofactor.

The enzyme catalyses chlorophyllide a + oxidized 2[4Fe-4S]-[ferredoxin] + 2 ADP + 2 phosphate = protochlorophyllide a + reduced 2[4Fe-4S]-[ferredoxin] + 2 ATP + 2 H2O. It participates in porphyrin-containing compound metabolism; chlorophyll biosynthesis (light-independent). Functionally, component of the dark-operative protochlorophyllide reductase (DPOR) that uses Mg-ATP and reduced ferredoxin to reduce ring D of protochlorophyllide (Pchlide) to form chlorophyllide a (Chlide). This reaction is light-independent. The L component serves as a unique electron donor to the NB-component of the complex, and binds Mg-ATP. This chain is Light-independent protochlorophyllide reductase iron-sulfur ATP-binding protein, found in Prochlorococcus marinus (strain MIT 9215).